The following is a 258-amino-acid chain: MKNYLLQIEYFGKNYCGWQRQSHSLSVQEELEKALSKIANQNIEVTCAGRTDTGVHATSQIVNFYSNAYRPLSAWQRGVNALLPQDIKILAVQQVDNNFNSRFTAINRTYNYIIYNSATSSPIFAEHCLWENRELDIDKMNQACEYLLGEQDFSSFRSSQCQSNTPFRNIQKAEFIKQGSFIVFEVVGNAFLHHMIRNLVGSLLKVGLGFESPEWIKVVLEAKDRTQAAETAKAHGLYFVGVEYPEFSFKRQIIKLFC.

D52 serves as the catalytic Nucleophile. Y110 contacts substrate.

This sequence belongs to the tRNA pseudouridine synthase TruA family. Homodimer.

It carries out the reaction uridine(38/39/40) in tRNA = pseudouridine(38/39/40) in tRNA. Its function is as follows. Formation of pseudouridine at positions 38, 39 and 40 in the anticodon stem and loop of transfer RNAs. This chain is tRNA pseudouridine synthase A, found in Francisella tularensis subsp. holarctica (strain LVS).